The primary structure comprises 89 residues: Large ribosomal subunit protein bL27 (89 aa).

Residues 1–22 (MAHKKAGGSSRNGRDSESKRLG) are disordered.

This sequence belongs to the bacterial ribosomal protein bL27 family.

The protein is Large ribosomal subunit protein bL27 of Bartonella tribocorum (strain CIP 105476 / IBS 506).